The primary structure comprises 500 residues: Replication factor C large subunit (500 aa).

Glycine 44 to threonine 51 contributes to the ATP binding site. Residues histidine 443–valine 500 form a disordered region. The segment covering threonine 455–glycine 466 has biased composition (low complexity). Residues aspartate 467 to glycine 492 are compositionally biased toward acidic residues.

It belongs to the activator 1 small subunits family. RfcL subfamily. In terms of assembly, heteromultimer composed of small subunits (RfcS) and large subunits (RfcL).

Functionally, part of the RFC clamp loader complex which loads the PCNA sliding clamp onto DNA. The chain is Replication factor C large subunit from Halorubrum lacusprofundi (strain ATCC 49239 / DSM 5036 / JCM 8891 / ACAM 34).